We begin with the raw amino-acid sequence, 464 residues long: MKLVLGNGLVNLSWEYMLSFSILLYFIFTQLIFVFEDHSLAKNLKVIPSEVINALFDNFNKNLNFDKYAYVQYATDFDYLNLAIINFIVLRRSSTKIPNLVVLFNRALQEDKNRFDGLRDLSLRYSVTLKPIPIIENVNAESPTWSKSFTKFHIFNEVKYDRIVYFDADSMLLHTQWNDNSSIVNNESNVPENLDELFTIPEIIDIALPQAYWLTKHTKASGKIKAPDGKGYQDEITALINEISKSVNDSLVFEKLPSLLVQSQKSNHRNNFFATHVMVVKPSNEIFNELKKYVHNPWLWSLHKRHALRNKSDYDMEVLNKFIDNVLQENENFKVGILPHKVYGVLTGEFRELSHESFVSEAQFLPFITGELNEQWRPIEIIRNIKLIHFSDSPIPKPWEGMNNFHFYNKFRIYCHDAGFDADLFNSLFPTSWKPRLTTDCDSVNIWNWIMAEYQKLHNELWMV.

Topologically, residues 1–14 (MKLVLGNGLVNLSW) are cytoplasmic. Residues 15-35 (EYMLSFSILLYFIFTQLIFVF) form a helical; Signal-anchor for type II membrane protein membrane-spanning segment. Topologically, residues 36–464 (EDHSLAKNLK…QKLHNELWMV (429 aa)) are lumenal. A DXD motif is present at residues 167–169 (DAD). N-linked (GlcNAc...) asparagine glycosylation is found at Asn-180, Asn-186, Asn-248, and Asn-310.

This sequence belongs to the GNT1 family.

Its subcellular location is the golgi apparatus membrane. It localises to the vacuole membrane. In terms of biological role, N-acetylglucosaminyltransferase involved in the Golgi-specific modification of N-linked glycans. The protein is Glucose N-acetyltransferase 1 (GNT1) of Debaryomyces hansenii (strain ATCC 36239 / CBS 767 / BCRC 21394 / JCM 1990 / NBRC 0083 / IGC 2968) (Yeast).